Consider the following 375-residue polypeptide: Putative disease resistance protein At3g15700 (375 aa).

A coiled-coil region spans residues 17 to 49; that stretch reads KENDNVKKLKTATEELKDLRNIVMKRVKMYEDQ. The NB-ARC domain occupies 158 to 372; the sequence is DNTGIIGLYG…LSTSPPNFSG (215 aa). 167–174 is an ATP binding site; that stretch reads GVEGVGKT.

Potential disease resistance protein. The polypeptide is Putative disease resistance protein At3g15700 (Arabidopsis thaliana (Mouse-ear cress)).